The chain runs to 702 residues: MDLSLRVALCLSMLALCLAIQKEKQVRWCVKSNSELKKCKDLVDTCKNKEIKLSCVEKSNTDECFTAIQEDHADAICVDGGDVYKGSLQPYNLKPIMAENYGSHTETDTCYYAVAVVKKSSKFTFDELKDKKSCHTGIGKTAGWNIIIGLLLEKKLLKWAGPDSETLEKAVSKFFKASCVPGAKEPKLCQLCAGIKEHKCSRSNNEPYYNYAGAFKCLQDDQGDVAFVKQSTVPEEFHKDYELLCPDNTRKSIKEYKNCNLAKVPAHAVLTRVRDDKSKDIIEFLQEAQKTQECKLFSSPYGKDLIFKDSAVSLIPLPSSMDSFLFLGADYSNAIQALKEGVKEDDSAAQVKVRWCTQSKAEKTKCDDWTTISGGAIECTEASTAEECIVQILKGDADAVTLDGGYMYTAGLCGLVPVMGEYYDQDDLTPCQRSSSQAKGVYYAVAIVKKGTQVSWSNLRGVKTCHTAVGRTAGWNIPVGLITSETGNCDFASYVGESCAPGSDVKSNLCALCIGDPEKLSESAKKCSPSASEAYYGYSGAFRCLVEKGQVGFAKHTTVFENTDGKNPAGWAKDLKSEDFELLCPDGSRAPVTDYKKCNLAEVPAHAVVTLPDKREQVAKIVVNQQSLYGRKGFQKDIFQMFQSTGGKDLLFKDSTQCLLEIPSKTTMQEFLGDKYHTAVTSLNKCSTSKSGLLAACTFHSC.

The first 19 residues, 1-19, serve as a signal peptide directing secretion; it reads MDLSLRVALCLSMLALCLA. Transferrin-like domains follow at residues 26–340 and 353–685; these read VRWC…ALKE and VRWC…SLNK. Disulfide bonds link Cys-29–Cys-64 and Cys-39–Cys-55. The Fe(3+) site is built by Asp-79 and Tyr-111. 3 cysteine pairs are disulfide-bonded: Cys-134–Cys-217, Cys-179–Cys-192, and Cys-245–Cys-259. Hydrogencarbonate is bound by residues Thr-136, Lys-140, Ala-142, and Gly-143. Tyr-211 serves as a coordination point for Fe(3+). His-267 provides a ligand contact to Fe(3+). Positions 340–349 are connecting region; it reads EGVKEDDSAA. 2 cysteine pairs are disulfide-bonded: Cys-356–Cys-388 and Cys-366–Cys-379. 2 residues coordinate Fe(3+): Asp-403 and Tyr-442. 7 disulfide bridges follow: Cys-413–Cys-697, Cys-431–Cys-658, Cys-465–Cys-544, Cys-489–Cys-686, Cys-499–Cys-513, Cys-510–Cys-527, and Cys-584–Cys-598. Thr-467, Arg-471, Ala-473, and Gly-474 together coordinate hydrogencarbonate. Tyr-538 contributes to the Fe(3+) binding site. Position 606 (His-606) interacts with Fe(3+).

The protein belongs to the transferrin family. In terms of assembly, monomer. Plasma.

It localises to the secreted. Functionally, transferrins are iron binding transport proteins which can bind two Fe(3+) ions in association with the binding of an anion, usually bicarbonate. It is responsible for the transport of iron from sites of absorption and heme degradation to those of storage and utilization. Serum transferrin may also have a further role in stimulating cell proliferation. The polypeptide is Serotransferrin-A (tf-a) (Xenopus laevis (African clawed frog)).